Here is a 68-residue protein sequence, read N- to C-terminus: Sec-independent protein translocase protein TatA (68 aa).

Residues 1–21 (MGSLSIWHWLIVLLIVVLVFG) traverse the membrane as a helical segment. A disordered region spans residues 42 to 68 (GMNEGAKDGQPPAKDAGRIIDGEADKK). Over residues 56–68 (DAGRIIDGEADKK) the composition is skewed to basic and acidic residues.

This sequence belongs to the TatA/E family. The Tat system comprises two distinct complexes: a TatABC complex, containing multiple copies of TatA, TatB and TatC subunits, and a separate TatA complex, containing only TatA subunits. Substrates initially bind to the TatABC complex, which probably triggers association of the separate TatA complex to form the active translocon.

It localises to the cell inner membrane. Functionally, part of the twin-arginine translocation (Tat) system that transports large folded proteins containing a characteristic twin-arginine motif in their signal peptide across membranes. TatA could form the protein-conducting channel of the Tat system. The polypeptide is Sec-independent protein translocase protein TatA (Chromobacterium violaceum (strain ATCC 12472 / DSM 30191 / JCM 1249 / CCUG 213 / NBRC 12614 / NCIMB 9131 / NCTC 9757 / MK)).